Here is a 176-residue protein sequence, read N- to C-terminus: Large ribosomal subunit protein uL15 (176 aa).

Over residues Met-1–Arg-13 the composition is skewed to basic and acidic residues. 2 disordered regions span residues Met-1 to Gly-48 and Ile-151 to Glu-176. A compositionally biased stretch (gly residues) spans Arg-21–Gln-35. The segment covering Pro-156–Glu-176 has biased composition (basic and acidic residues).

Belongs to the universal ribosomal protein uL15 family. Part of the 50S ribosomal subunit.

In terms of biological role, binds to the 23S rRNA. The protein is Large ribosomal subunit protein uL15 of Erythrobacter litoralis (strain HTCC2594).